Here is a 277-residue protein sequence, read N- to C-terminus: 4-hydroxy-3-methylbut-2-enyl diphosphate reductase (277 aa).

Cys-12 serves as a coordination point for [4Fe-4S] cluster. (2E)-4-hydroxy-3-methylbut-2-enyl diphosphate contacts are provided by His-36 and His-70. Residues His-36 and His-70 each contribute to the dimethylallyl diphosphate site. Isopentenyl diphosphate is bound by residues His-36 and His-70. Cys-92 is a binding site for [4Fe-4S] cluster. His-120 is a binding site for (2E)-4-hydroxy-3-methylbut-2-enyl diphosphate. Dimethylallyl diphosphate is bound at residue His-120. Residue His-120 participates in isopentenyl diphosphate binding. The Proton donor role is filled by Glu-122. Thr-160 contributes to the (2E)-4-hydroxy-3-methylbut-2-enyl diphosphate binding site. Cys-188 provides a ligand contact to [4Fe-4S] cluster. Ser-216, Ser-217, Asn-218, and Ser-260 together coordinate (2E)-4-hydroxy-3-methylbut-2-enyl diphosphate. Dimethylallyl diphosphate contacts are provided by Ser-216, Ser-217, Asn-218, and Ser-260. Residues Ser-216, Ser-217, Asn-218, and Ser-260 each coordinate isopentenyl diphosphate.

This sequence belongs to the IspH family. Requires [4Fe-4S] cluster as cofactor.

It catalyses the reaction isopentenyl diphosphate + 2 oxidized [2Fe-2S]-[ferredoxin] + H2O = (2E)-4-hydroxy-3-methylbut-2-enyl diphosphate + 2 reduced [2Fe-2S]-[ferredoxin] + 2 H(+). The enzyme catalyses dimethylallyl diphosphate + 2 oxidized [2Fe-2S]-[ferredoxin] + H2O = (2E)-4-hydroxy-3-methylbut-2-enyl diphosphate + 2 reduced [2Fe-2S]-[ferredoxin] + 2 H(+). It participates in isoprenoid biosynthesis; dimethylallyl diphosphate biosynthesis; dimethylallyl diphosphate from (2E)-4-hydroxy-3-methylbutenyl diphosphate: step 1/1. It functions in the pathway isoprenoid biosynthesis; isopentenyl diphosphate biosynthesis via DXP pathway; isopentenyl diphosphate from 1-deoxy-D-xylulose 5-phosphate: step 6/6. Catalyzes the conversion of 1-hydroxy-2-methyl-2-(E)-butenyl 4-diphosphate (HMBPP) into a mixture of isopentenyl diphosphate (IPP) and dimethylallyl diphosphate (DMAPP). Acts in the terminal step of the DOXP/MEP pathway for isoprenoid precursor biosynthesis. This is 4-hydroxy-3-methylbut-2-enyl diphosphate reductase from Sulfurovum sp. (strain NBC37-1).